Consider the following 541-residue polypeptide: Calcium-dependent protein kinase 9 (541 aa).

The tract at residues 1–75 is disordered; that stretch reads MGNCFAKNHG…PGLSPKTTTK (75 aa). A lipid anchor (N-myristoyl glycine) is attached at Gly-2. The span at 14 to 54 shows a compositional bias: polar residues; the sequence is PQQNGNTTRSVEVGVTNQDPPSYTPQARTTQQPEKPGSVNS. Ser-69 carries the phosphoserine modification. Residues 91-349 enclose the Protein kinase domain; the sequence is YTLGKELGRG…AADVLQHPWL (259 aa). Residues 97–105 and Lys-120 each bind ATP; that span reads LGRGQFGVT. Residue Asp-215 is the Proton acceptor of the active site. Residue Ser-255 is modified to Phosphoserine. An autoinhibitory domain region spans residues 355 to 385; that stretch reads ASDKPIDSAVLSRMKQFRAMNKLKKLALKVI. EF-hand domains are found at residues 392 to 427, 428 to 463, 464 to 499, and 500 to 534; these read EEIQ…LGSK, LTEA…RHRL, ESNE…YGMG, and DDAT…GNPQ. 20 residues coordinate Ca(2+): Asp-405, Asp-407, Ser-409, Thr-411, Glu-416, Asp-441, Asp-443, Asn-445, Ser-447, Glu-452, Asp-477, Asp-479, Ser-481, Tyr-483, Glu-488, Asp-512, Asp-514, Asp-516, Arg-518, and Glu-523.

It belongs to the protein kinase superfamily. Ser/Thr protein kinase family. CDPK subfamily.

The protein localises to the cell membrane. It catalyses the reaction L-seryl-[protein] + ATP = O-phospho-L-seryl-[protein] + ADP + H(+). The enzyme catalyses L-threonyl-[protein] + ATP = O-phospho-L-threonyl-[protein] + ADP + H(+). Activated by calcium. Autophosphorylation may play an important role in the regulation of the kinase activity. In terms of biological role, may play a role in signal transduction pathways that involve calcium as a second messenger. In Arabidopsis thaliana (Mouse-ear cress), this protein is Calcium-dependent protein kinase 9 (CPK9).